A 260-amino-acid chain; its full sequence is Voltage-dependent calcium channel gamma-6 subunit (260 aa).

Positions 14–33 are disordered; sequence RRGAAGRRRAHGQGRSGLTP. Basic residues predominate over residues 15–25; the sequence is RGAAGRRRAHG. Helical transmembrane passes span 43–63, 143–163, 169–189, and 221–241; these read LLLAAVGATLAVLSVGTEFWV, VIAVLGLAVMALGCLCIIMVL, FLLRVGAVCFGLSGLLLLVSL, and LGCGVGAGLILLLGAGCFLLL.

The protein belongs to the PMP-22/EMP/MP20 family. CACNG subfamily. As to quaternary structure, interacts with CACNA1C. Identified in a complex with the L-type calcium channel subunits CACNA1C, CACNA2D1 and either CACNB1 or CACNB2. Detected in heart left ventricle.

Its subcellular location is the cell membrane. Its function is as follows. Regulates the activity of L-type calcium channels that contain CACNA1C as pore-forming subunit. The chain is Voltage-dependent calcium channel gamma-6 subunit (CACNG6) from Homo sapiens (Human).